A 144-amino-acid polypeptide reads, in one-letter code: Group IID secretory phospholipase A2 (144 aa).

The signal sequence occupies residues 1 to 19 (MRLALLCGLLLAGITATQG). Disulfide bonds link C45–C137, C47–C63, C62–C117, C68–C144, C69–C110, C78–C103, and C96–C108. 3 residues coordinate Ca(2+): H46, G48, and G50. The active site involves H66. Position 67 (D67) interacts with Ca(2+). N-linked (GlcNAc...) asparagine glycosylation occurs at N99. D111 is a catalytic residue.

The protein belongs to the phospholipase A2 family. The cofactor is Ca(2+). Highly expressed in secondary lymphoid tissues, spleen and lymph nodes. Expressed at a lesser extent in thymus. Expressed in CD4-positive, IL2RA/CD25-positive, FOXP3-positive Tregs (at protein level). Expressed in myeloid cell subsets resident in spleen and lymph nodes, ITGAX/CD11C-positive dendritic cells and macrophages (at protein level). Enriched in CD4-positive, ITGAM/CD11B-positive dendritic cell subset. Expressed in pulmonary ITGAX/CD11C-positive dendritic cell subset (at protein level).

It is found in the secreted. It localises to the cell membrane. The protein resides in the cytoplasm. It carries out the reaction a 1,2-diacyl-sn-glycero-3-phosphoethanolamine + H2O = a 1-acyl-sn-glycero-3-phosphoethanolamine + a fatty acid + H(+). The enzyme catalyses 1-hexadecanoyl-2-(9Z-octadecenoyl)-sn-glycero-3-phosphoethanolamine + H2O = 1-hexadecanoyl-sn-glycero-3-phosphoethanolamine + (9Z)-octadecenoate + H(+). The catalysed reaction is 1-hexadecanoyl-2-(9Z,12Z-octadecadienoyl)-sn-glycero-3-phosphoethanolamine + H2O = 1-hexadecanoyl-sn-glycero-3-phosphoethanolamine + (9Z,12Z)-octadecadienoate + H(+). It catalyses the reaction 1,2-dihexadecanoyl-sn-glycero-3-phospho-(1'-sn-glycerol) + H2O = 1-hexadecanoyl-sn-glycero-3-phospho-(1'-sn-glycerol) + hexadecanoate + H(+). It carries out the reaction 1-hexadecanoyl-2-(9Z-octadecenoyl)-sn-glycero-3-phospho-(1'-sn-glycerol) + H2O = 1-hexadecanoyl-sn-glycero-3-phospho-(1'-sn-glycerol) + (9Z)-octadecenoate + H(+). The enzyme catalyses a 1,2-diacyl-sn-glycero-3-phosphocholine + H2O = a 1-acyl-sn-glycero-3-phosphocholine + a fatty acid + H(+). The catalysed reaction is 1,2-dihexadecanoyl-sn-glycero-3-phosphocholine + H2O = 1-hexadecanoyl-sn-glycero-3-phosphocholine + hexadecanoate + H(+). It catalyses the reaction 1-hexadecanoyl-2-(9Z-octadecenoyl)-sn-glycero-3-phosphocholine + H2O = 1-hexadecanoyl-sn-glycero-3-phosphocholine + (9Z)-octadecenoate + H(+). It carries out the reaction 1-hexadecanoyl-2-(9Z,12Z-octadecadienoyl)-sn-glycero-3-phosphocholine + H2O = (9Z,12Z)-octadecadienoate + 1-hexadecanoyl-sn-glycero-3-phosphocholine + H(+). The enzyme catalyses 1-hexadecanoyl-2-(4Z,7Z,10Z,13Z,16Z,19Z-docosahexaenoyl)-sn-glycero-3-phosphocholine + H2O = (4Z,7Z,10Z,13Z,16Z,19Z)-docosahexaenoate + 1-hexadecanoyl-sn-glycero-3-phosphocholine + H(+). Secretory calcium-dependent phospholipase A2 that primarily targets extracellular lipids, exerting anti-inflammatory and immunosuppressive functions. Hydrolyzes the ester bond of the fatty acyl group attached at sn-2 position of phospholipids (phospholipase A2 activity) with preference for phosphatidylethanolamines and phosphatidylglycerols over phosphatidylcholines. In draining lymph nodes, selectively hydrolyzes diacyl and alkenyl forms of phosphatidylethanolamines, releasing omega-3 polyunsaturated fatty acids (PUFAs) such as eicosapentaenoate and docosahexaenoate that are precursors of the anti-inflammatory lipid mediators, resolvins. During the resolution phase of acute inflammation drives docosahexaenoate-derived resolvin D1 synthesis, which suppresses dendritic cell activation and T-helper 1 immune response. May act in an autocrine and paracrine manner. Via a mechanism independent of its catalytic activity, promotes differentiation of regulatory T cells (Tregs) and participates in the maintenance of immune tolerance. May contribute to lipid remodeling of cellular membranes and generation of lipid mediators involved in pathogen clearance. Displays bactericidal activity against Gram-positive bacteria by directly hydrolyzing phospholipids of the bacterial membrane. This is Group IID secretory phospholipase A2 (Pla2g2d) from Mus musculus (Mouse).